We begin with the raw amino-acid sequence, 541 residues long: MDFSSLLLLLLNTWISAYSMAALLALVLVYNLRMTKSSSSKTTSLKGKKIITRPPAVTGAWPVFGHLHLFGSGEHPHEMLSKLAEKYGPSFTMKFGKHTTLVVSDTRVVKECFTTNDTLFSNRPSTIAFDLMTYATDSIAFTPYSPYWRELRKISTLKLLSNNRLESIKQLRTSEVSVCFKELYDLTNKKNDNGAPVPIDLKRWFDEVSNNVIMRVIFGKQNFGSKIVLGEDQEAVHYKKIMDELSRLSSLTMLSDMVPLLGWLDYFKGDLRAMKRNGKELNSILQKWLEEHKSKKSSDARQDFMDVMLSISKDTQLYGHDQDTFIKATCLAMIMGGTNSTEVALTWILSLLMNNRCALHKAREEIDLLVGKDRQVEDSDVKNLTYMNAIIKETMRLYPLGFLLERDTKEDCEVSGFNIKGGTRLLINVWKLQRDPNVWTDPMEFKPERFLTENADIDVGGQHFELLPFGAGRRVCPGVSFALQFMHLVLARLIHGYDMETLNGEDVDLSVSSGGHVNIKSTPLELILTPRLHPELYDCET.

Residues 9 to 29 (LLLNTWISAYSMAALLALVLV) form a helical membrane-spanning segment. Heme is bound at residue cysteine 476.

This sequence belongs to the cytochrome P450 family. The cofactor is heme.

The protein resides in the endoplasmic reticulum membrane. The catalysed reaction is protopine + reduced [NADPH--hemoprotein reductase] + O2 = 6-hydroxyprotopine + oxidized [NADPH--hemoprotein reductase] + H2O + H(+). The protein operates within alkaloid biosynthesis. Functionally, catalyzes the conversion of protopine and allocryptopine to dihydrosanguinarine and dihydrochelerythrine, respectively, in the biosynthesis of isoquinoline alkaloid sanguinarine. This chain is Protopine 6-monooxygenase (CYP82N3), found in Papaver somniferum (Opium poppy).